A 1044-amino-acid polypeptide reads, in one-letter code: MPIQEAEKSYRPHRIEEKVQSFWEERDIYERVKELREDRPRYSFLDGPPYCSGRIHLGTAWNKIMKDTYLRFKSMKGFNVRRQPGWDTHGLPIEHKVEGLLGVRSKKDIEDKIGIEEFVNKCREFAVENKAVMTGQFQRLGVWMDWDDPYVTFDPAYMESCWWTLKRAHEKDLLVRDLRVITWCPRCETALALAEIDYHDKEDPSIYVKFPVSGDTHILVWTTTPWTLPANMAVAVHPDFEYAYARLDGETYIMAEALVEKVLGEEAEILKRVKGTELEGLTYRHPLDDEVPLHREIEHRVILGDHVTLTEGTGCVHTAPGHGPEDFEIGKKYGLEVICPVDEAGIFTEEAGKYSGRFVKDADEDIIADLRSKGLLLKAGTISHRYGFCWRCKTPIIYLATEQWFLKITEIKDKMLRELDRVQWVPSWAGESRFRNWIENARDWTISRQRYWGIPIPIWICEECDSIHVVGSIDELRELAVEGELEGDFIHRPHVDRIVLECGECGGRMKRTPDVLDVWIDSGVAGWAALHYPSETELFREWFPYDFITEGHDQTRGWFYSQLGCGVIALDEVPYRRVLMHGFTLDEEGRKMSKSLGNVVEPEDVIEKYGADVLRFYLLWENKPWEDLKFVWDELRNVNKMFNILWNVYVFATTYMSLDRFQPGDHSAEDLSFRDEDRWILSRINSVALKVTEAIENLHFHRATREIHDFIVEDLSRWYIRLIRSRTWIERDDPDKLAAYHTLYTVLKTLIVTLSPMAPHVCEDIYQNLVRGAEPDSPESIHMLDWILDEGAVDSQLEADMDIVREIIEACARARDTARYKLRWPVREMVVVSEDEGVLKAAESLKNVIAEQANAKSIKTSTEFPDMKIIARPNPATLGPRLRQDIPLVMRELEGADGSAVKAALDSDGEFTVETDGKKFKLTSEDIVFETELPENIVSAQFDGGSVFIDTELTPEIMSEAMARELVRRIQDMRKDLDLDVEASIEVSVKCSEEFRELTEPQREFIENEVRASTLSFDYSELEYTKEWKISDENLIISIKPAKV.

Residues 49–59 (PYCSGRIHLGT) carry the 'HIGH' region motif. The 'KMSKS' region signature appears at 591–595 (KMSKS). Lys594 serves as a coordination point for ATP.

This sequence belongs to the class-I aminoacyl-tRNA synthetase family. IleS type 2 subfamily. As to quaternary structure, monomer. It depends on Zn(2+) as a cofactor.

Its subcellular location is the cytoplasm. The catalysed reaction is tRNA(Ile) + L-isoleucine + ATP = L-isoleucyl-tRNA(Ile) + AMP + diphosphate. Catalyzes the attachment of isoleucine to tRNA(Ile). As IleRS can inadvertently accommodate and process structurally similar amino acids such as valine, to avoid such errors it has two additional distinct tRNA(Ile)-dependent editing activities. One activity is designated as 'pretransfer' editing and involves the hydrolysis of activated Val-AMP. The other activity is designated 'posttransfer' editing and involves deacylation of mischarged Val-tRNA(Ile). In Methanothermobacter thermautotrophicus (strain ATCC 29096 / DSM 1053 / JCM 10044 / NBRC 100330 / Delta H) (Methanobacterium thermoautotrophicum), this protein is Isoleucine--tRNA ligase.